Here is a 325-residue protein sequence, read N- to C-terminus: NADH-quinone oxidoreductase subunit H (325 aa).

The next 8 helical transmembrane spans lie at 11–31, 81–101, 114–134, 154–174, 186–206, 237–257, 265–285, and 304–324; these read ILLT…CGAF, VIFT…FAIV, IGIL…LFAG, LSYE…AGSF, VWNV…GVAV, FFVG…TLFF, LPPF…FILI, and ICLP…LWQA.

This sequence belongs to the complex I subunit 1 family. In terms of assembly, NDH-1 is composed of 13 different subunits. Subunits NuoA, H, J, K, L, M, N constitute the membrane sector of the complex.

The protein resides in the cell inner membrane. It carries out the reaction a quinone + NADH + 5 H(+)(in) = a quinol + NAD(+) + 4 H(+)(out). Functionally, NDH-1 shuttles electrons from NADH, via FMN and iron-sulfur (Fe-S) centers, to quinones in the respiratory chain. The immediate electron acceptor for the enzyme in this species is believed to be ubiquinone. Couples the redox reaction to proton translocation (for every two electrons transferred, four hydrogen ions are translocated across the cytoplasmic membrane), and thus conserves the redox energy in a proton gradient. This subunit may bind ubiquinone. This chain is NADH-quinone oxidoreductase subunit H, found in Escherichia coli O7:K1 (strain IAI39 / ExPEC).